The following is a 406-amino-acid chain: Enoyl-[acyl-carrier-protein] reductase [NADH] (406 aa).

NAD(+) contacts are provided by residues 48–53 (GASTGF), 74–75 (FE), 111–112 (DA), and 140–141 (IA). Y226 provides a ligand contact to substrate. Y236 (proton donor) is an active-site residue. NAD(+) contacts are provided by residues K245 and 275 to 277 (LVT).

It belongs to the TER reductase family. Monomer.

It catalyses the reaction a 2,3-saturated acyl-[ACP] + NAD(+) = a (2E)-enoyl-[ACP] + NADH + H(+). It participates in lipid metabolism; fatty acid biosynthesis. Involved in the final reduction of the elongation cycle of fatty acid synthesis (FAS II). Catalyzes the reduction of a carbon-carbon double bond in an enoyl moiety that is covalently linked to an acyl carrier protein (ACP). This is Enoyl-[acyl-carrier-protein] reductase [NADH] from Coxiella burnetii (strain CbuK_Q154) (Coxiella burnetii (strain Q154)).